We begin with the raw amino-acid sequence, 251 residues long: Imidazole glycerol phosphate synthase subunit HisF (251 aa).

Residues D11 and D130 contribute to the active site.

Belongs to the HisA/HisF family. As to quaternary structure, heterodimer of HisH and HisF.

The protein resides in the cytoplasm. The enzyme catalyses 5-[(5-phospho-1-deoxy-D-ribulos-1-ylimino)methylamino]-1-(5-phospho-beta-D-ribosyl)imidazole-4-carboxamide + L-glutamine = D-erythro-1-(imidazol-4-yl)glycerol 3-phosphate + 5-amino-1-(5-phospho-beta-D-ribosyl)imidazole-4-carboxamide + L-glutamate + H(+). It functions in the pathway amino-acid biosynthesis; L-histidine biosynthesis; L-histidine from 5-phospho-alpha-D-ribose 1-diphosphate: step 5/9. In terms of biological role, IGPS catalyzes the conversion of PRFAR and glutamine to IGP, AICAR and glutamate. The HisF subunit catalyzes the cyclization activity that produces IGP and AICAR from PRFAR using the ammonia provided by the HisH subunit. In Chlorobaculum parvum (strain DSM 263 / NCIMB 8327) (Chlorobium vibrioforme subsp. thiosulfatophilum), this protein is Imidazole glycerol phosphate synthase subunit HisF.